Consider the following 131-residue polypeptide: ER membrane protein complex subunit 5 (131 aa).

The Cytoplasmic segment spans residues 1-3 (MAP). The chain crosses the membrane as a helical span at residues 4-22 (SLWKGLVGVGLFALAHAAF). Residues 23 to 43 (SAAQHRSYMRLTEKEDESLPI) lie on the Lumenal side of the membrane. The helical transmembrane segment at 44 to 63 (DIVLQTLLAFAVTCYGIVHI) threads the bilayer. Over 64-131 (AGEFKDMDAT…KLRKFDSLRR (68 aa)) the chain is Cytoplasmic. Position 120 is a phosphoserine (Ser120).

This sequence belongs to the membrane magnesium transporter (TC 1.A.67) family. Component of the ER membrane protein complex (EMC). As to expression, abundant in heart muscle and kidney with lower levels in liver and brain and very little expression in intestine or colon. In kidney, highest levels in distal convoluted tubule.

It is found in the endoplasmic reticulum membrane. Its subcellular location is the golgi apparatus membrane. It localises to the early endosome membrane. Part of the endoplasmic reticulum membrane protein complex (EMC) that enables the energy-independent insertion into endoplasmic reticulum membranes of newly synthesized membrane proteins. Preferentially accommodates proteins with transmembrane domains that are weakly hydrophobic or contain destabilizing features such as charged and aromatic residues. Involved in the cotranslational insertion of multi-pass membrane proteins in which stop-transfer membrane-anchor sequences become ER membrane spanning helices. It is also required for the post-translational insertion of tail-anchored/TA proteins in endoplasmic reticulum membranes. By mediating the proper cotranslational insertion of N-terminal transmembrane domains in an N-exo topology, with translocated N-terminus in the lumen of the ER, controls the topology of multi-pass membrane proteins like the G protein-coupled receptors. By regulating the insertion of various proteins in membranes, it is indirectly involved in many cellular processes. May be involved Mg(2+) transport. The chain is ER membrane protein complex subunit 5 from Mus musculus (Mouse).